The chain runs to 306 residues: Pantothenate kinase (306 aa).

ATP is bound at residue 91–98; it reads GSVAVGKS.

Belongs to the prokaryotic pantothenate kinase family.

The protein resides in the cytoplasm. The catalysed reaction is (R)-pantothenate + ATP = (R)-4'-phosphopantothenate + ADP + H(+). Its pathway is cofactor biosynthesis; coenzyme A biosynthesis; CoA from (R)-pantothenate: step 1/5. In Streptococcus agalactiae serotype Ia (strain ATCC 27591 / A909 / CDC SS700), this protein is Pantothenate kinase.